Here is a 314-residue protein sequence, read N- to C-terminus: Serine/threonine-protein phosphatase PP-Y (314 aa).

The Mn(2+) site is built by aspartate 60, histidine 62, aspartate 88, and asparagine 120. Catalysis depends on histidine 121, which acts as the Proton donor. Residues histidine 169 and histidine 244 each coordinate Mn(2+).

Belongs to the PPP phosphatase family. PP-Y subfamily. Mn(2+) serves as cofactor.

The catalysed reaction is O-phospho-L-seryl-[protein] + H2O = L-seryl-[protein] + phosphate. It catalyses the reaction O-phospho-L-threonyl-[protein] + H2O = L-threonyl-[protein] + phosphate. In Drosophila melanogaster (Fruit fly), this protein is Serine/threonine-protein phosphatase PP-Y (PpY-55A).